Here is a 480-residue protein sequence, read N- to C-terminus: Protein nucleotidyltransferase YdiU (480 aa).

The ATP site is built by Gly-87, Gly-89, Arg-90, Lys-110, Asp-122, Gly-123, Arg-173, and Arg-180. Residue Asp-245 is the Proton acceptor of the active site. Mg(2+) contacts are provided by Asn-246 and Asp-255. Residue Asp-255 coordinates ATP.

It belongs to the SELO family. Requires Mg(2+) as cofactor. The cofactor is Mn(2+).

The catalysed reaction is L-seryl-[protein] + ATP = 3-O-(5'-adenylyl)-L-seryl-[protein] + diphosphate. It carries out the reaction L-threonyl-[protein] + ATP = 3-O-(5'-adenylyl)-L-threonyl-[protein] + diphosphate. It catalyses the reaction L-tyrosyl-[protein] + ATP = O-(5'-adenylyl)-L-tyrosyl-[protein] + diphosphate. The enzyme catalyses L-histidyl-[protein] + UTP = N(tele)-(5'-uridylyl)-L-histidyl-[protein] + diphosphate. The catalysed reaction is L-seryl-[protein] + UTP = O-(5'-uridylyl)-L-seryl-[protein] + diphosphate. It carries out the reaction L-tyrosyl-[protein] + UTP = O-(5'-uridylyl)-L-tyrosyl-[protein] + diphosphate. Its function is as follows. Nucleotidyltransferase involved in the post-translational modification of proteins. It can catalyze the addition of adenosine monophosphate (AMP) or uridine monophosphate (UMP) to a protein, resulting in modifications known as AMPylation and UMPylation. The sequence is that of Protein nucleotidyltransferase YdiU from Jannaschia sp. (strain CCS1).